The sequence spans 361 residues: Phospho-N-acetylmuramoyl-pentapeptide-transferase (361 aa).

Helical transmembrane passes span 27–47, 72–92, 99–119, 139–159, 169–189, 200–220, 240–260, 264–284, 289–309, and 338–358; these read GALF…ISLL, TPTM…LLWA, VWIT…DDYL, ALIA…GLAY, AIVN…VGAG, GLAI…AYLV, LAVV…FNAP, IFMG…VAVA, IVLA…IIQV, and QVVI…LATL.

This sequence belongs to the glycosyltransferase 4 family. MraY subfamily. Mg(2+) is required as a cofactor.

The protein resides in the cell inner membrane. It carries out the reaction UDP-N-acetyl-alpha-D-muramoyl-L-alanyl-gamma-D-glutamyl-meso-2,6-diaminopimeloyl-D-alanyl-D-alanine + di-trans,octa-cis-undecaprenyl phosphate = di-trans,octa-cis-undecaprenyl diphospho-N-acetyl-alpha-D-muramoyl-L-alanyl-D-glutamyl-meso-2,6-diaminopimeloyl-D-alanyl-D-alanine + UMP. Its pathway is cell wall biogenesis; peptidoglycan biosynthesis. Functionally, catalyzes the initial step of the lipid cycle reactions in the biosynthesis of the cell wall peptidoglycan: transfers peptidoglycan precursor phospho-MurNAc-pentapeptide from UDP-MurNAc-pentapeptide onto the lipid carrier undecaprenyl phosphate, yielding undecaprenyl-pyrophosphoryl-MurNAc-pentapeptide, known as lipid I. The polypeptide is Phospho-N-acetylmuramoyl-pentapeptide-transferase (Methylobacterium nodulans (strain LMG 21967 / CNCM I-2342 / ORS 2060)).